Reading from the N-terminus, the 338-residue chain is Phenylalanine--tRNA ligase alpha subunit (338 aa).

Glu-253 serves as a coordination point for Mg(2+).

The protein belongs to the class-II aminoacyl-tRNA synthetase family. Phe-tRNA synthetase alpha subunit type 1 subfamily. As to quaternary structure, tetramer of two alpha and two beta subunits. It depends on Mg(2+) as a cofactor.

The protein localises to the cytoplasm. It catalyses the reaction tRNA(Phe) + L-phenylalanine + ATP = L-phenylalanyl-tRNA(Phe) + AMP + diphosphate + H(+). This is Phenylalanine--tRNA ligase alpha subunit from Legionella pneumophila (strain Lens).